Consider the following 618-residue polypeptide: Acetolactate synthase (618 aa).

Residues 1–30 form a disordered region; the sequence is MSAPTKPHSPTFKPEPHSAANEPKHPAARP. Glu-85 contributes to the thiamine diphosphate binding site. FAD-binding positions include Arg-187, 293-314, and 336-355; these read HGTVAAVAALQRSDLLIALGTR and DIDPAEIGKNRHADVPIVGD. Positions 429–509 are thiamine pyrophosphate binding; sequence QHQMWAAQFI…VKVALINNGN (81 aa). Asp-480 and Asn-507 together coordinate Mg(2+).

The protein belongs to the TPP enzyme family. Requires Mg(2+) as cofactor. Thiamine diphosphate is required as a cofactor.

It carries out the reaction 2 pyruvate + H(+) = (2S)-2-acetolactate + CO2. Its pathway is amino-acid biosynthesis; L-isoleucine biosynthesis; L-isoleucine from 2-oxobutanoate: step 1/4. The protein operates within amino-acid biosynthesis; L-valine biosynthesis; L-valine from pyruvate: step 1/4. The sequence is that of Acetolactate synthase (ilvB) from Mycobacterium bovis (strain ATCC BAA-935 / AF2122/97).